Here is a 97-residue protein sequence, read N- to C-terminus: Co-chaperonin GroES (97 aa).

Belongs to the GroES chaperonin family. Heptamer of 7 subunits arranged in a ring. Interacts with the chaperonin GroEL.

It is found in the cytoplasm. Functionally, together with the chaperonin GroEL, plays an essential role in assisting protein folding. The GroEL-GroES system forms a nano-cage that allows encapsulation of the non-native substrate proteins and provides a physical environment optimized to promote and accelerate protein folding. GroES binds to the apical surface of the GroEL ring, thereby capping the opening of the GroEL channel. The sequence is that of Co-chaperonin GroES from Buchnera aphidicola subsp. Pemphigus spyrothecae.